The chain runs to 85 residues: Oxytocin-neurophysin 1 (85 aa).

Glycine amide is present on Gly-3. Cystine bridges form between Cys-16–Cys-60, Cys-19–Cys-33, Cys-27–Cys-50, Cys-34–Cys-40, Cys-67–Cys-79, and Cys-80–Cys-85.

This sequence belongs to the vasopressin/oxytocin family. As to quaternary structure, interacts with oxytocin receptor (Ki=1.5 nM). Interacts with vasopressin V1aR/AVPR1A (Ki=37 nM), V1bR/AVPR1B (Ki=222 nM), and V2R/AVPR2 receptors (Ki=823 nM).

Its function is as follows. Neurophysin 1 specifically binds oxytocin. Oxytocin causes contraction of the smooth muscle of the uterus and of the mammary gland. Acts by binding to oxytocin receptor (OXTR). The sequence is that of Oxytocin-neurophysin 1 (OXT) from Papio hamadryas (Hamadryas baboon).